The primary structure comprises 477 residues: MTDTKQLFIEAGQSQLFHNWESLSRKDQEELLSNLEQISSKRSPAKLLEDCQNAIKFSLANSSKDTGVEISPLPPTSYESLIGNSKKENEYWRLGLEAIGKGEVAVILMAGGQGTRLGSSQPKGCYDIGLPSKKSLFQIQAEKLIRLQDMVKDKKVEIPWYIMTSGPTRAATEAYFQEHNYFGLNKEQITFFNQGTLPAFDLTGKHFLMKDPVNLSQSPDGNGGLYRAIKENKLNEDFDRRGIKHVYMYCVDNVLSKIADPVFIGFAIKHGFELATKAVRKRDAHESVGLIATKNEKPCVIEYSEISNELAEAKDKDGLLKLRAGNIVNHYYLVDLLKRDLDQWCENMPYHIAKKKIPAYDSVTGKYTKPTEPNGIKLEQFIFDVFDTVPLNKFGCLEVDRCKEFSPLKNGPGSKNDNPETSRLAYLKLGTSWLEDAGAIVKDGVLVEVSSKLSYAGENLSQFKGKVFDRSGIVLEK.

Positions 109–112 (MAGG) match the Substrate binding motif. Residues 109–112 (MAGG), lysine 123, and glutamine 194 each bind UTP. Serine 218 carries the phosphoserine modification. Residue glycine 221 participates in UTP binding. Asparagine 222 contacts substrate. Aspartate 252 is a UTP binding site. A Substrate binding motif is present at residues 302–303 (EY). Residue lysine 377 participates in UTP binding. Position 409 (lysine 409) interacts with substrate. Serine 461 carries the phosphoserine modification.

The protein belongs to the UDPGP type 1 family.

It localises to the cytoplasm. The enzyme catalyses N-acetyl-alpha-D-glucosamine 1-phosphate + UTP + H(+) = UDP-N-acetyl-alpha-D-glucosamine + diphosphate. The protein operates within nucleotide-sugar biosynthesis; UDP-N-acetyl-alpha-D-glucosamine biosynthesis; UDP-N-acetyl-alpha-D-glucosamine from N-acetyl-alpha-D-glucosamine 1-phosphate: step 1/1. Its function is as follows. UDP-N-acetylglucosamine pyrophosphorylase that utilizes N-acetylglucosamine-1-phosphate as substrate. Together with AGM1, is involved in the production of UDP-N-acetylglucosamine from N-acetylglucosamine-6-phosphate. The protein is UDP-N-acetylglucosamine pyrophosphorylase (QRI1) of Saccharomyces cerevisiae (strain ATCC 204508 / S288c) (Baker's yeast).